The sequence spans 151 residues: Acidic phospholipase A2 2 (151 aa).

Positions 1 to 27 (MYPAHLLVLLAVCVSLLGAASIPARPL) are cleaved as a signal peptide. Intrachain disulfides connect cysteine 38–cysteine 104, cysteine 54–cysteine 151, cysteine 56–cysteine 72, cysteine 71–cysteine 132, cysteine 78–cysteine 125, cysteine 88–cysteine 118, and cysteine 111–cysteine 123. Residues tyrosine 55, glycine 57, and glycine 59 each contribute to the Ca(2+) site. Residue histidine 75 is part of the active site. Residue aspartate 76 participates in Ca(2+) binding. The active site involves aspartate 126.

It belongs to the phospholipase A2 family. Group I subfamily. D49 sub-subfamily. Ca(2+) serves as cofactor. Expressed by the venom gland.

The protein localises to the secreted. The enzyme catalyses a 1,2-diacyl-sn-glycero-3-phosphocholine + H2O = a 1-acyl-sn-glycero-3-phosphocholine + a fatty acid + H(+). In terms of biological role, PLA2 catalyzes the calcium-dependent hydrolysis of the 2-acyl groups in 3-sn-phosphoglycerides. The sequence is that of Acidic phospholipase A2 2 from Tropidechis carinatus (Australian rough-scaled snake).